The following is a 201-amino-acid chain: MKHFLLLAIIGILFLGSTYGASVATEKLKASNCTKTEGFQAIACVLRMADFAQKIEKLDMDDKNQVNEFEKSCVSFANCFETLQCGPEDPAEKKINNMIKNYCDAVVYVAKDFADCSEKLENKNSTCYQNWDPFPDAIDEETDEKKKEKMLQEACKNYFGKDNCLKKEITEKCSETEWKGFRDHFIGISNILLECDFRNIQ.

The Cytoplasmic segment spans residues 1–3 (MKH). Residues 4-24 (FLLLAIIGILFLGSTYGASVA) form a helical; Signal-anchor for type II membrane protein membrane-spanning segment. Residues 25-201 (TEKLKASNCT…LLECDFRNIQ (177 aa)) lie on the Extracellular side of the membrane. Residues N32 and N124 are each glycosylated (N-linked (GlcNAc...) asparagine).

This sequence belongs to the UPF0376 family.

The protein resides in the membrane. This is UPF0376 protein F10G2.1 from Caenorhabditis elegans.